The primary structure comprises 644 residues: MFQDNPLLAQLKQQLHSQTPRAEGVVKATEKGFGFLEVDAQKSYFIPPPQMKKVMHGDRIIAVIHSEKERESAEPEELVEPFLTRFVGKVQGKNDRLAIVPDHPLLKDAIPCRAARGLNHEFKEGDWAVAEMRRHPLKGDRSFYAELTQYITFGDDHFVPWWVTLARHNLEKEAPDGVATEMLDEGLVREDLTALDFVTIDSASTEDMDDALFAKALPDDKLQLIVAIADPTAWIAEGSKLDKAAKIRAFTNYLPGFNIPMLPRELSDDLCSLRANEVRPVLACRMTLSADGAIEDNIEFFAATIESKAKLVYDQVSDWLENTGDWQPESEAIAEQVRLLAQICQRRGEWRHNHALVFKDRPDYRFILGEKGEVLDIVAEPRRIANRIVEEAMIAANICAARVLRDKLGFGIYNVHMGFDPANADALAALLKTHGLHVDAEEVLTLDGFCKLRRELDAQPTGFLDSRIRRFQSFAEISTEPGPHFGLGLEAYATWTSPIRKYGDMINHRLLKAVIKGETATRPQDEITVQMAERRRLNRMAERDVGDWLYARFLKDKAGTDTRFAAEIVDISRGGMRVRLVDNGAIAFIPAPFLHAMRDELVCSQENGTVQIKGETVYKVTDVIDVTIAEVRMETRSIIARPVA.

Residues 189-516 (REDLTALDFV…NHRLLKAVIK (328 aa)) form the RNB domain. The 83-residue stretch at 561-643 (DTRFAAEIVD…ETRSIIARPV (83 aa)) folds into the S1 motif domain.

It belongs to the RNR ribonuclease family. RNase II subfamily.

It is found in the cytoplasm. It carries out the reaction Exonucleolytic cleavage in the 3'- to 5'-direction to yield nucleoside 5'-phosphates.. Involved in mRNA degradation. Hydrolyzes single-stranded polyribonucleotides processively in the 3' to 5' direction. This chain is Exoribonuclease 2, found in Shigella boydii serotype 18 (strain CDC 3083-94 / BS512).